The primary structure comprises 578 residues: Proline--tRNA ligase (578 aa).

The protein belongs to the class-II aminoacyl-tRNA synthetase family. ProS type 1 subfamily. In terms of assembly, homodimer.

It is found in the cytoplasm. The enzyme catalyses tRNA(Pro) + L-proline + ATP = L-prolyl-tRNA(Pro) + AMP + diphosphate. Catalyzes the attachment of proline to tRNA(Pro) in a two-step reaction: proline is first activated by ATP to form Pro-AMP and then transferred to the acceptor end of tRNA(Pro). As ProRS can inadvertently accommodate and process non-cognate amino acids such as alanine and cysteine, to avoid such errors it has two additional distinct editing activities against alanine. One activity is designated as 'pretransfer' editing and involves the tRNA(Pro)-independent hydrolysis of activated Ala-AMP. The other activity is designated 'posttransfer' editing and involves deacylation of mischarged Ala-tRNA(Pro). The misacylated Cys-tRNA(Pro) is not edited by ProRS. In Burkholderia cenocepacia (strain ATCC BAA-245 / DSM 16553 / LMG 16656 / NCTC 13227 / J2315 / CF5610) (Burkholderia cepacia (strain J2315)), this protein is Proline--tRNA ligase.